A 103-amino-acid chain; its full sequence is Pyrimidine/purine nucleoside phosphorylase (103 aa).

It belongs to the nucleoside phosphorylase PpnP family.

It carries out the reaction a purine D-ribonucleoside + phosphate = a purine nucleobase + alpha-D-ribose 1-phosphate. It catalyses the reaction adenosine + phosphate = alpha-D-ribose 1-phosphate + adenine. The catalysed reaction is cytidine + phosphate = cytosine + alpha-D-ribose 1-phosphate. The enzyme catalyses guanosine + phosphate = alpha-D-ribose 1-phosphate + guanine. It carries out the reaction inosine + phosphate = alpha-D-ribose 1-phosphate + hypoxanthine. It catalyses the reaction thymidine + phosphate = 2-deoxy-alpha-D-ribose 1-phosphate + thymine. The catalysed reaction is uridine + phosphate = alpha-D-ribose 1-phosphate + uracil. The enzyme catalyses xanthosine + phosphate = alpha-D-ribose 1-phosphate + xanthine. Catalyzes the phosphorolysis of diverse nucleosides, yielding D-ribose 1-phosphate and the respective free bases. Can use uridine, adenosine, guanosine, cytidine, thymidine, inosine and xanthosine as substrates. Also catalyzes the reverse reactions. In Chlorobium chlorochromatii (strain CaD3), this protein is Pyrimidine/purine nucleoside phosphorylase.